The primary structure comprises 251 residues: Alanyl-tRNA editing protein AlaX-M (251 aa).

Residues H107, H111, C210, and H214 each coordinate Zn(2+).

It belongs to the class-II aminoacyl-tRNA synthetase family. Editing domain AlaX-M subfamily. Zn(2+) serves as cofactor.

The protein resides in the cytoplasm. Functions in trans to edit the amino acid moiety from mischarged Ser-tRNA(Ala). Recognition depends, at least in part, on the acceptor stem of tRNA(Ala). The protein is Alanyl-tRNA editing protein AlaX-M (alaXM) of Methanosarcina mazei (strain ATCC BAA-159 / DSM 3647 / Goe1 / Go1 / JCM 11833 / OCM 88) (Methanosarcina frisia).